The primary structure comprises 5571 residues: Polyketide synthase GfsB (5571 aa).

The segment at Met-1–Asn-27 is disordered. Basic and acidic residues predominate over residues Gly-18 to Asn-27. In terms of domain architecture, Ketosynthase family 3 (KS3) 1 spans Gln-57–Gln-483. Module stretches follow at residues Gln-57–Leu-2148, Asp-2167–Val-3728, and Asp-3746–Leu-5485. Residues Cys-230, His-365, and His-405 each act as for beta-ketoacyl synthase 1 activity in the active site. A disordered region spans residues Pro-485–Val-518. Residues Phe-611 to His-926 enclose the Malonyl-CoA:ACP transacylase (MAT) 1 domain. The tract at residues His-976–Pro-1109 is N-terminal hotdog fold 1. One can recognise a PKS/mFAS DH 1 domain in the interval His-976–Pro-1264. His-1008 acts as the Proton acceptor; for dehydratase activity 1 in catalysis. Residues Ala-1122–Pro-1264 form a C-terminal hotdog fold 1 region. The active-site Proton donor; for dehydratase activity 1 is Asp-1183. Residues Gly-1478–Leu-1777 form the Enoyl reductase (ER) domain. A Ketoreductase (KR) 1 domain is found at Gly-1787 to Glu-1966. In terms of domain architecture, Carrier 1 spans Arg-2073–Leu-2148. O-(pantetheine 4'-phosphoryl)serine is present on Ser-2108. The Ketosynthase family 3 (KS3) 2 domain maps to Asp-2167–Gln-2593. Catalysis depends on for beta-ketoacyl synthase 2 activity residues Cys-2340, His-2475, and His-2515. The Malonyl-CoA:ACP transacylase (MAT) 2 domain maps to Val-2710–Arg-3016. The Ketoreductase (KR) 2 domain occupies Gly-3373–Glu-3551. The Carrier 2 domain maps to Thr-3653–Val-3728. Ser-3688 is subject to O-(pantetheine 4'-phosphoryl)serine. The Ketosynthase family 3 (KS3) 3 domain occupies Asp-3746–Gln-4172. Active-site for beta-ketoacyl synthase 3 activity residues include Cys-3919, His-4054, and His-4094. The Malonyl-CoA:ACP transacylase (MAT) 3 domain occupies Phe-4279–Pro-4601. Residues His-4649–Asp-4774 form an N-terminal hotdog fold 2 region. Residues His-4649–Ala-4931 enclose the PKS/mFAS DH 2 domain. Residue His-4681 is the Proton acceptor; for dehydratase activity 2 of the active site. The C-terminal hotdog fold 2 stretch occupies residues Ala-4787–Ala-4931. The active-site Proton donor; for dehydratase activity 2 is Asp-4848. Residues Leu-5134 to Glu-5306 form the Ketoreductase (KR) 3 domain. Residues Arg-5410–Leu-5485 enclose the Carrier 3 domain. Residue Ser-5445 is modified to O-(pantetheine 4'-phosphoryl)serine.

It depends on pantetheine 4'-phosphate as a cofactor.

The protein operates within antibiotic biosynthesis. Functionally, second protein in the synthesis of the 16-membered macrolide antibiotics FD-891 and FD-892. Composed of 3 modules. Modifies the product of GfsA by multiple rounds of addition of malonyl-CoA or methylmalonyl-CoA and other modifications to help generate the final products. In Streptomyces halstedii, this protein is Polyketide synthase GfsB.